Here is a 325-residue protein sequence, read N- to C-terminus: 4-hydroxy-3-methylbut-2-enyl diphosphate reductase (325 aa).

Position 21 (Cys21) interacts with [4Fe-4S] cluster. Residues His50 and His83 each coordinate (2E)-4-hydroxy-3-methylbut-2-enyl diphosphate. The dimethylallyl diphosphate site is built by His50 and His83. Residues His50 and His83 each coordinate isopentenyl diphosphate. Cys105 lines the [4Fe-4S] cluster pocket. A (2E)-4-hydroxy-3-methylbut-2-enyl diphosphate-binding site is contributed by His133. His133 is a dimethylallyl diphosphate binding site. Residue His133 coordinates isopentenyl diphosphate. Glu135 acts as the Proton donor in catalysis. Residue Thr173 participates in (2E)-4-hydroxy-3-methylbut-2-enyl diphosphate binding. A [4Fe-4S] cluster-binding site is contributed by Cys203. Positions 231, 232, 233, and 275 each coordinate (2E)-4-hydroxy-3-methylbut-2-enyl diphosphate. 4 residues coordinate dimethylallyl diphosphate: Ser231, Ser232, Asn233, and Ser275. Residues Ser231, Ser232, Asn233, and Ser275 each contribute to the isopentenyl diphosphate site.

It belongs to the IspH family. The cofactor is [4Fe-4S] cluster.

The enzyme catalyses isopentenyl diphosphate + 2 oxidized [2Fe-2S]-[ferredoxin] + H2O = (2E)-4-hydroxy-3-methylbut-2-enyl diphosphate + 2 reduced [2Fe-2S]-[ferredoxin] + 2 H(+). It carries out the reaction dimethylallyl diphosphate + 2 oxidized [2Fe-2S]-[ferredoxin] + H2O = (2E)-4-hydroxy-3-methylbut-2-enyl diphosphate + 2 reduced [2Fe-2S]-[ferredoxin] + 2 H(+). It functions in the pathway isoprenoid biosynthesis; dimethylallyl diphosphate biosynthesis; dimethylallyl diphosphate from (2E)-4-hydroxy-3-methylbutenyl diphosphate: step 1/1. It participates in isoprenoid biosynthesis; isopentenyl diphosphate biosynthesis via DXP pathway; isopentenyl diphosphate from 1-deoxy-D-xylulose 5-phosphate: step 6/6. In terms of biological role, catalyzes the conversion of 1-hydroxy-2-methyl-2-(E)-butenyl 4-diphosphate (HMBPP) into a mixture of isopentenyl diphosphate (IPP) and dimethylallyl diphosphate (DMAPP). Acts in the terminal step of the DOXP/MEP pathway for isoprenoid precursor biosynthesis. The protein is 4-hydroxy-3-methylbut-2-enyl diphosphate reductase of Bordetella pertussis (strain Tohama I / ATCC BAA-589 / NCTC 13251).